We begin with the raw amino-acid sequence, 266 residues long: uncharacterized protein (266 aa).

Residues 1–22 form the signal peptide; that stretch reads MRYLKKLAWFISVIILGIFIIG. The N-palmitoyl cysteine moiety is linked to residue Cys-23. Cys-23 is lipidated: S-diacylglycerol cysteine.

The protein belongs to the staphylococcal tandem lipoprotein family.

Its subcellular location is the cell membrane. This is an uncharacterized protein from Staphylococcus aureus (strain USA300).